The primary structure comprises 555 residues: Potassium-transporting ATPase potassium-binding subunit (555 aa).

The next 10 membrane-spanning stretches (helical) occupy residues 2–22, 60–80, 130–150, 173–193, 246–266, 278–298, 374–394, 412–432, 483–503, and 525–545; these read IWVAVVITMLLFILVAKPTGI, QYALSLVLLNGFMIVVVYFIF, IGITFLMFAAPATTLALVMAF, VFLPIAFMAALVFVALGVPQT, MSNILQMMLMMLLPTALPFTY, ILFVSLFMVFLLGFITITTSE, AGFVNIIMYAIIAVFISGLMV, LIAVTILFHPLLILGFSALAL, LVMFLGRYFSLITMLAVAASL, and GIFIGTIVIVGALTFFPMLVL.

It belongs to the KdpA family. The system is composed of three essential subunits: KdpA, KdpB and KdpC.

It is found in the cell membrane. Functionally, part of the high-affinity ATP-driven potassium transport (or Kdp) system, which catalyzes the hydrolysis of ATP coupled with the electrogenic transport of potassium into the cytoplasm. This subunit binds the extracellular potassium ions and delivers the ions to the membrane domain of KdpB through an intramembrane tunnel. The chain is Potassium-transporting ATPase potassium-binding subunit from Bacillus anthracis (strain A0248).